A 426-amino-acid polypeptide reads, in one-letter code: NADH-quinone oxidoreductase subunit D 1 (426 aa).

Positions 1–51 (MATEFTVPDSAARIATAQQAGGGTPVRSGPPDEGGEFSGDRMSLSMGPSHP) are disordered.

It belongs to the complex I 49 kDa subunit family. As to quaternary structure, NDH-1 is composed of 14 different subunits. Subunits NuoB, C, D, E, F, and G constitute the peripheral sector of the complex.

It is found in the cell inner membrane. The catalysed reaction is a quinone + NADH + 5 H(+)(in) = a quinol + NAD(+) + 4 H(+)(out). Functionally, NDH-1 shuttles electrons from NADH, via FMN and iron-sulfur (Fe-S) centers, to quinones in the respiratory chain. The immediate electron acceptor for the enzyme in this species is believed to be ubiquinone. Couples the redox reaction to proton translocation (for every two electrons transferred, four hydrogen ions are translocated across the cytoplasmic membrane), and thus conserves the redox energy in a proton gradient. This chain is NADH-quinone oxidoreductase subunit D 1, found in Opitutus terrae (strain DSM 11246 / JCM 15787 / PB90-1).